We begin with the raw amino-acid sequence, 267 residues long: Undecaprenyl-diphosphatase 2 (267 aa).

8 helical membrane passes run 4 to 24 (IYFIKAFFLGVIEGITEFLPI), 43 to 63 (EEKVFEVVIQLGGILAVCWLF), 84 to 104 (FAVIVMISFLPSAIIGALFIH), 109 to 129 (VLFNTTVVATALIVGGLIILW), 147 to 167 (IGFKQAIIIGIAQCIAMIPGT), 186 to 206 (AATEYSFFLAIPTMLGAAIYD), 219 to 239 (ILAILIGFSAAFISALIVVNA), and 243 to 263 (FVAKHSLSVFAWYRIALGLII).

This sequence belongs to the UppP family.

The protein resides in the cell inner membrane. It carries out the reaction di-trans,octa-cis-undecaprenyl diphosphate + H2O = di-trans,octa-cis-undecaprenyl phosphate + phosphate + H(+). Functionally, catalyzes the dephosphorylation of undecaprenyl diphosphate (UPP). Confers resistance to bacitracin. The sequence is that of Undecaprenyl-diphosphatase 2 from Shewanella oneidensis (strain ATCC 700550 / JCM 31522 / CIP 106686 / LMG 19005 / NCIMB 14063 / MR-1).